Here is a 208-residue protein sequence, read N- to C-terminus: Uracil phosphoribosyltransferase (208 aa).

5-phospho-alpha-D-ribose 1-diphosphate contacts are provided by residues R78, R103, and 130–138 (DPMLATGGS). Residues I193 and 198–200 (GDA) contribute to the uracil site. D199 contributes to the 5-phospho-alpha-D-ribose 1-diphosphate binding site.

It belongs to the UPRTase family. Mg(2+) serves as cofactor.

It catalyses the reaction UMP + diphosphate = 5-phospho-alpha-D-ribose 1-diphosphate + uracil. Its pathway is pyrimidine metabolism; UMP biosynthesis via salvage pathway; UMP from uracil: step 1/1. Its activity is regulated as follows. Allosterically activated by GTP. Functionally, catalyzes the conversion of uracil and 5-phospho-alpha-D-ribose 1-diphosphate (PRPP) to UMP and diphosphate. This Klebsiella pneumoniae (strain 342) protein is Uracil phosphoribosyltransferase.